Consider the following 381-residue polypeptide: Probable cyclic AMP-AMP-GMP nucleotide synthase (381 aa).

GTP is bound by residues S53 and R56. Catalysis depends on residues D69 and D71. Positions 69 and 71 each coordinate Mg(2+). Residue R109 participates in GTP binding. D121 is an active-site residue. Positions 121 and 196 each coordinate Mg(2+). GTP contacts are provided by R197, R204, T205, Q210, and R307. The tract at residues 348–381 (GTKFPFPGPQGGDRSGGFTAPTQPAEPQKTGRFA) is disordered.

Belongs to the CD-NTase family. D02 subfamily. Mg(2+) is required as a cofactor.

It carries out the reaction GTP + 2 ATP = 3',3',3'-cAAG + 3 diphosphate. In terms of biological role, cyclic nucleotide synthase (second messenger synthase) of a CBASS antivirus system. CBASS (cyclic oligonucleotide-based antiphage signaling system) provides immunity against bacteriophage. The CD-NTase protein synthesizes cyclic nucleotides in response to infection; these serve as specific second messenger signals. The signals activate a diverse range of effectors, leading to bacterial cell death and thus abortive phage infection. Cyclic nucleotide synthase, synthesizes a tricyclic nucleotide with AMP and GMP moieties, probably 3',3',3'-cyclic AMP-AMP-GMP (3'3'3'-cAAG). Controls the activity of the associated CBASS effector protein. The chain is Probable cyclic AMP-AMP-GMP nucleotide synthase from Salmonella paratyphi B (Salmonella enterica subsp. enterica serovar Paratyphi B).